Reading from the N-terminus, the 3567-residue chain is Zinc finger homeobox protein 4 (3567 aa).

Met1 is subject to N-acetylmethionine. 4 disordered regions span residues 1–54 (METC…LKTD), 425–480 (LSHS…AYSN), 522–545 (TSSS…VRAS), and 565–611 (SKDS…SPGS). The span at 9–28 (ISRQENGQSTSKLCGTTQLD) shows a compositional bias: polar residues. Basic and acidic residues-rich tracts occupy residues 39-54 (EPDR…LKTD) and 434-452 (KMSE…KESN). Over residues 468-480 (EPGDEDEEDAYSN) the composition is skewed to acidic residues. 3 consecutive C2H2-type zinc fingers follow at residues 613-636 (IECP…TMMH), 644-667 (LKCP…KEKH), and 699-723 (FRCE…SDKH). A C2H2-type 4; degenerate zinc finger spans residues 767–789 (WRCEVCDYETNVARNLRIHMTSE). C2H2-type zinc fingers lie at residues 917–941 (YQCK…TDKH), 973–995 (LKCN…TTNH), and 1021–1045 (YYCA…SVKH). The disordered stretch occupies residues 1098–1160 (EQHEEAEGAI…EDVATKRSKP (63 aa)). 2 stretches are compositionally biased toward basic and acidic residues: residues 1120-1132 (TSER…KNSN) and 1148-1160 (AKEE…RSKP). Residue Lys1149 forms a Glycyl lysine isopeptide (Lys-Gly) (interchain with G-Cter in SUMO2) linkage. 2 consecutive C2H2-type zinc fingers follow at residues 1172–1195 (YQCP…LSQH) and 1201–1224 (ICCP…THLH). A disordered region spans residues 1254-1324 (AASEKSERDT…WNKNSSKDVK (71 aa)). Positions 1281 to 1310 (MDDKSMAGLEDSKANVEVKNEEQKPTKEPL) are enriched in basic and acidic residues. Glycyl lysine isopeptide (Lys-Gly) (interchain with G-Cter in SUMO2) cross-links involve residues Lys1299 and Lys1324. 2 C2H2-type zinc fingers span residues 1352 to 1374 (YRCN…SQYH) and 1380 to 1403 (TMCN…EAGH). The segment at 1429-1480 (ETMSQDDHGLEQEMEREYEVDHEGKASPVGSDSSSIPDDMGSEPKRTLPFRK) is disordered. A compositionally biased stretch (basic and acidic residues) spans 1433–1453 (QDDHGLEQEMEREYEVDHEGK). Residues 1496-1522 (YKCTVCKESFTQKNILLVHYNSVSHLH) form a C2H2-type 12 zinc finger. Lys1546 is covalently cross-linked (Glycyl lysine isopeptide (Lys-Gly) (interchain with G-Cter in SUMO2)). The segment at 1548–1572 (YKCSICNVAYSQSSTLEIHMRSVLH) adopts a C2H2-type 13 zinc-finger fold. Low complexity-rich tracts occupy residues 1761-1772 (TQPQLQPQKQQQ) and 1779-1791 (QQQQ…LLKQ). Disordered stretches follow at residues 1761–1791 (TQPQ…LLKQ) and 1809–1858 (SYKE…IASG). Lys1790 is covalently cross-linked (Glycyl lysine isopeptide (Lys-Gly) (interchain with G-Cter in SUMO2)). Residues 1809–1845 (SYKEAEDISEKPEKPKQEFISEGEGLKEGKDTKKQKS) show a composition bias toward basic and acidic residues. A C2H2-type 14 zinc finger spans residues 1901–1924 (LECGTCGKLFSNVLILKSHQEHVH). The tract at residues 1948-2024 (YPISPSSPET…PPSAPPQVQL (77 aa)) is disordered. Composition is skewed to pro residues over residues 1955–1974 (PETP…PPQP) and 1991–2019 (QAPP…PSAP). DNA-binding regions (homeobox) lie at residues 2084–2143 (FKRP…RQRN) and 2181–2240 (KRSS…RKSY). A C2H2-type 15; degenerate zinc finger spans residues 2267 to 2291 (YQCKKCNVVFPRIFDLITHQKKQCY). 2 disordered regions span residues 2289-2311 (QCYK…MDAT) and 2328-2431 (AKNA…SPLQ). Residues 2293-2309 (DEDDDAQDESQTEDSMD) are compositionally biased toward acidic residues. A compositionally biased stretch (low complexity) spans 2331 to 2345 (AAAPAASSGSGTSTP). A compositionally biased stretch (basic and acidic residues) spans 2352-2370 (PEPEKTSPKPEYPAEKPKQ). The span at 2419-2431 (SASQTPVPSSPLQ) shows a compositional bias: polar residues. A C2H2-type 16 zinc finger spans residues 2448-2470 (YQCDQCTVAFPTLELWQEHQHMH). The span at 2507–2530 (LGSSLTQMPPQASSSHTTAPTTVA) shows a compositional bias: polar residues. The segment at 2507–2564 (LGSSLTQMPPQASSSHTTAPTTVAASLKRKLDDKEDNNCSEKEGGNSGEDQHRDKRLR) is disordered. Over residues 2535–2559 (RKLDDKEDNNCSEKEGGNSGEDQHR) the composition is skewed to basic and acidic residues. A DNA-binding region (homeobox 3) is located at residues 2560–2619 (DKRLRTTITPEQLEILYEKYLLDSNPTRKMLDHIAREVGLKKRVVQVWFQNTRARERKGQ). The C2H2-type 17 zinc finger occupies 2630–2653 (KRCPFCRALFKAKSALESHIRSRH). Position 2663 is a phosphoserine (Ser2663). Over residues 2764-2785 (AISDATTGDEGNTEMESTTGSS) the composition is skewed to polar residues. Disordered stretches follow at residues 2764–2811 (AISD…TTPT) and 2829–2885 (HFND…PGHK). Basic and acidic residues predominate over residues 2830–2839 (FNDKDGDHDQ). Low complexity predominate over residues 2862–2874 (PSSPNPFGSSNPF). The homeobox 4 DNA-binding region spans 2884 to 2943 (HKRFRTQMSNLQLKVLKACFSDYRTPTMQECEMLGNEIGLPKRVVQVWFQNARAKEKKFK). The C2H2-type 18 zinc-finger motif lies at 2962–2986 (PECTLCGVKYSARLSIRDHIFSKQH). A compositionally biased stretch (low complexity) spans 3092–3110 (SATSSPALSLSSAPTKPLL). Disordered stretches follow at residues 3092 to 3172 (SATS…KEEK) and 3281 to 3337 (LQKQ…LESK). A compositionally biased stretch (pro residues) spans 3111–3125 (QTPPPPPPPPPPPPS). A compositionally biased stretch (polar residues) spans 3126 to 3135 (SSLSGQQTEQ). The segment covering 3153–3172 (IKEEELEATKPEKHPKKEEK) has biased composition (basic and acidic residues). Lys3154 is covalently cross-linked (Glycyl lysine isopeptide (Lys-Gly) (interchain with G-Cter in SUMO2)). Residues 3265-3294 (ALLQQYQQYQQNLQESLQKQQKQQQEQQQK) adopt a coiled-coil conformation. The segment covering 3281 to 3293 (LQKQQKQQQEQQQ) has biased composition (low complexity). Residues 3294 to 3314 (KPVQAKTSKVESDQPQNSNDA) show a composition bias toward polar residues. Residues 3315–3337 (SETKEDKSTATESTKEEPQLESK) show a composition bias toward basic and acidic residues. The segment at 3354–3378 (FICRKCQMMFTDEDAAVNHQKSFCY) adopts a C2H2-type 19; degenerate zinc-finger fold. Residues 3398-3422 (YQCLACDVAISGNEALSQHLQSSLH) form a C2H2-type 20 zinc finger. Disordered regions lie at residues 3443–3462 (HSVC…AASS) and 3511–3534 (STSG…ELSQ). Over residues 3447 to 3462 (SPNPNTTSTSQSAASS) the composition is skewed to low complexity.

Belongs to the krueppel C2H2-type zinc-finger protein family. As to expression, expressed in brain, skeletal muscle and liver. Very low expression in stomach.

It is found in the nucleus. In terms of biological role, may play a role in neural and muscle differentiation. May be involved in transcriptional regulation. The chain is Zinc finger homeobox protein 4 (ZFHX4) from Homo sapiens (Human).